The primary structure comprises 628 residues: Beta-galactosidase large subunit (628 aa).

Glutamate 468 (proton donor) is an active-site residue. The Nucleophile role is filled by glutamate 536.

Belongs to the glycosyl hydrolase 2 family. Heterodimer of a large (LacL) and a small subunit (LacM).

The enzyme catalyses Hydrolysis of terminal non-reducing beta-D-galactose residues in beta-D-galactosides.. Component of a beta-galactosidase. This chain is Beta-galactosidase large subunit, found in Lactobacillus helveticus (Lactobacillus suntoryeus).